Reading from the N-terminus, the 370-residue chain is 4-hydroxy-3-methylbut-2-en-1-yl diphosphate synthase (flavodoxin) (370 aa).

The [4Fe-4S] cluster site is built by Cys270, Cys273, Cys305, and Glu312.

Belongs to the IspG family. [4Fe-4S] cluster serves as cofactor.

The catalysed reaction is (2E)-4-hydroxy-3-methylbut-2-enyl diphosphate + oxidized [flavodoxin] + H2O + 2 H(+) = 2-C-methyl-D-erythritol 2,4-cyclic diphosphate + reduced [flavodoxin]. It participates in isoprenoid biosynthesis; isopentenyl diphosphate biosynthesis via DXP pathway; isopentenyl diphosphate from 1-deoxy-D-xylulose 5-phosphate: step 5/6. Its function is as follows. Converts 2C-methyl-D-erythritol 2,4-cyclodiphosphate (ME-2,4cPP) into 1-hydroxy-2-methyl-2-(E)-butenyl 4-diphosphate. The chain is 4-hydroxy-3-methylbut-2-en-1-yl diphosphate synthase (flavodoxin) from Saccharophagus degradans (strain 2-40 / ATCC 43961 / DSM 17024).